Reading from the N-terminus, the 258-residue chain is UPF0246 protein Pnec_1068 (258 aa).

It belongs to the UPF0246 family.

The chain is UPF0246 protein Pnec_1068 from Polynucleobacter necessarius subsp. necessarius (strain STIR1).